A 437-amino-acid polypeptide reads, in one-letter code: Probable eukaryotic translation initiation factor 5-2 (437 aa).

A GTP-binding site is contributed by 29 to 36; sequence GKGNGIKT. Basic and acidic residues-rich tracts occupy residues 148-179 and 191-212; these read EQKKVSKDKKAMRKAEKERLKEGELADEEQRK and KDSKTSKNHSSDEDISPKHDEN. Disordered regions lie at residues 148 to 231 and 262 to 284; these read EQKK…WQTD and EKKAPKSKSNGNVVKTENPPPQE. Ser-201 is subject to Phosphoserine; by CK2. Positions 213 to 226 are enriched in acidic residues; it reads ALEVDEDEDDDDGV. Residue Thr-230 is modified to Phosphothreonine; by CK2. A W2 domain is found at 278-436; the sequence is ENPPPQEKNL…QSAESESEEE (159 aa). Residues Ser-428, Ser-431, and Ser-433 each carry the phosphoserine; by CK2 modification.

It belongs to the eIF-2-beta/eIF-5 family. Post-translationally, phosphorylated at Ser-201, Thr-230, Ser-428, Ser-431, and Ser-433 by CK2.

Functionally, catalyzes the hydrolysis of GTP bound to the 40S ribosomal initiation complex (40S.mRNA.Met-tRNA[F].eIF-2.GTP) with the subsequent joining of a 60S ribosomal subunit resulting in the release of eIF-2 and the guanine nucleotide. The subsequent joining of a 60S ribosomal subunit results in the formation of a functional 80S initiation complex (80S.mRNA.Met-tRNA[F]). The protein is Probable eukaryotic translation initiation factor 5-2 of Arabidopsis thaliana (Mouse-ear cress).